A 284-amino-acid polypeptide reads, in one-letter code: Acetylglutamate kinase (284 aa).

Residues 64 to 65 (GG), arginine 86, and asparagine 177 each bind substrate.

This sequence belongs to the acetylglutamate kinase family. ArgB subfamily.

The protein resides in the cytoplasm. The enzyme catalyses N-acetyl-L-glutamate + ATP = N-acetyl-L-glutamyl 5-phosphate + ADP. It participates in amino-acid biosynthesis; L-arginine biosynthesis; N(2)-acetyl-L-ornithine from L-glutamate: step 2/4. In terms of biological role, catalyzes the ATP-dependent phosphorylation of N-acetyl-L-glutamate. The polypeptide is Acetylglutamate kinase (Haemophilus ducreyi (strain 35000HP / ATCC 700724)).